The sequence spans 1818 residues: Cytadherence high molecular weight protein 2 (1818 aa).

4 coiled-coil regions span residues 31–880 (LESA…KQRE), 919–1607 (ELKI…DNKH), 1644–1755 (HLFE…QAVQ), and 1786–1817 (LATQ…QKAA).

In terms of processing, phosphorylated mainly on serine residues.

Its function is as follows. Component of the cytoskeleton-like structure which stabilizes the shape of the wall-less Mycoplasma. This cytoskeleton-like network of accessory proteins containing HMW proteins 1 to 5 allows the proper anchoring of cytadhesin proteins in the mycoplasmal membrane at the attachment organelle. The polypeptide is Cytadherence high molecular weight protein 2 (hmw2) (Mycoplasma pneumoniae (strain ATCC 29342 / M129 / Subtype 1) (Mycoplasmoides pneumoniae)).